Here is a 523-residue protein sequence, read N- to C-terminus: Polyamine aminopropyltransferase (523 aa).

7 helical membrane-spanning segments follow: residues 20–40 (VLLA…LALL), 51–71 (IVAT…GALL), 88–108 (AVLG…FAFL), 116–136 (LVLA…VPLL), 164–184 (LGAL…LGMI), 186–206 (GAAV…IFLL), and 215–235 (LVTA…LLVH). Positions 203–478 (IFLLRHVVSG…APTPAVPSTA (276 aa)) are spermidine synthase. The region spanning 231-465 (TLLVHSHDIE…GDWGFALARL (235 aa)) is the PABS domain. Residue Gln-261 participates in S-methyl-5'-thioadenosine binding. Asp-313 lines the spermidine pocket. S-methyl-5'-thioadenosine-binding positions include Glu-333 and 365–366 (DA). The active-site Proton acceptor is Asp-386.

Belongs to the spermidine/spermine synthase family. As to quaternary structure, homodimer or homotetramer.

The protein resides in the cell membrane. It catalyses the reaction S-adenosyl 3-(methylsulfanyl)propylamine + putrescine = S-methyl-5'-thioadenosine + spermidine + H(+). Its pathway is amine and polyamine biosynthesis; spermidine biosynthesis; spermidine from putrescine: step 1/1. Its function is as follows. Catalyzes the irreversible transfer of a propylamine group from the amino donor S-adenosylmethioninamine (decarboxy-AdoMet) to putrescine (1,4-diaminobutane) to yield spermidine. The sequence is that of Polyamine aminopropyltransferase from Mycobacterium bovis (strain ATCC BAA-935 / AF2122/97).